Consider the following 357-residue polypeptide: Alternative oxidase, mitochondrial (357 aa).

Residues 152-172 (LTRCIFLESIAGVPGAVASFI) traverse the membrane as a helical segment. 3 residues coordinate Fe cation: Glu159, Glu198, and His201. A helical membrane pass occupies residues 218–238 (IIYVGQGVFCNLFFLFYLANP). Glu249, Glu304, and His307 together coordinate Fe cation. The interval 330–357 (IPDLKEPQPESGLKVTKPHGWEKEELKL) is disordered. Over residues 348-357 (HGWEKEELKL) the composition is skewed to basic and acidic residues.

Belongs to the alternative oxidase family. It depends on Fe cation as a cofactor.

The protein localises to the mitochondrion inner membrane. Catalyzes cyanide-resistant oxygen consumption. May increase respiration when the cytochrome respiratory pathway is restricted, or in response to low temperatures. The sequence is that of Alternative oxidase, mitochondrial (STO1) from Scheffersomyces stipitis (strain ATCC 58785 / CBS 6054 / NBRC 10063 / NRRL Y-11545) (Yeast).